A 673-amino-acid chain; its full sequence is DNA ligase (673 aa).

NAD(+) contacts are provided by residues aspartate 32–aspartate 36, serine 81–leucine 82, and glutamate 111. Catalysis depends on lysine 113, which acts as the N6-AMP-lysine intermediate. 4 residues coordinate NAD(+): arginine 134, glutamate 171, lysine 286, and lysine 310. Residues cysteine 404, cysteine 407, cysteine 422, and cysteine 428 each coordinate Zn(2+). A BRCT domain is found at asparagine 595–phenylalanine 673.

This sequence belongs to the NAD-dependent DNA ligase family. LigA subfamily. Requires Mg(2+) as cofactor. The cofactor is Mn(2+).

It catalyses the reaction NAD(+) + (deoxyribonucleotide)n-3'-hydroxyl + 5'-phospho-(deoxyribonucleotide)m = (deoxyribonucleotide)n+m + AMP + beta-nicotinamide D-nucleotide.. Functionally, DNA ligase that catalyzes the formation of phosphodiester linkages between 5'-phosphoryl and 3'-hydroxyl groups in double-stranded DNA using NAD as a coenzyme and as the energy source for the reaction. It is essential for DNA replication and repair of damaged DNA. In Ureaplasma urealyticum serovar 10 (strain ATCC 33699 / Western), this protein is DNA ligase.